Here is a 266-residue protein sequence, read N- to C-terminus: Acetyl esterase (266 aa).

This Caldicellulosiruptor saccharolyticus (Caldocellum saccharolyticum) protein is Acetyl esterase (xynC).